The primary structure comprises 133 residues: Protein msa (133 aa).

4 helical membrane passes run 3–23, 27–47, 55–75, and 103–123; these read YLIL…AIGL, ILAA…ILFF, YIFF…VHLM, and FGFD…IVLY.

The protein localises to the cell membrane. Its function is as follows. Accessory element involved in the expression of sarA and several virulence factors. Modulates SarA production and/or function in a strain-dependent manner. Affects the transcription of the accessory gene regulator (agr) and genes encoding virulence factors including alpha toxin (hla) and protein A (spa). The chain is Protein msa (msa) from Staphylococcus aureus (strain USA300).